The primary structure comprises 411 residues: LL-diaminopimelate aminotransferase (411 aa).

Substrate-binding residues include tyrosine 15 and glycine 42. Residues tyrosine 72, 108–109, tyrosine 132, asparagine 187, tyrosine 218, and 246–248 contribute to the pyridoxal 5'-phosphate site; these read SK and SFS. Residues lysine 109, tyrosine 132, and asparagine 187 each coordinate substrate. Lysine 249 bears the N6-(pyridoxal phosphate)lysine mark. Residues arginine 257 and asparagine 292 each coordinate pyridoxal 5'-phosphate. 2 residues coordinate substrate: asparagine 292 and arginine 388.

This sequence belongs to the class-I pyridoxal-phosphate-dependent aminotransferase family. LL-diaminopimelate aminotransferase subfamily. As to quaternary structure, homodimer. Pyridoxal 5'-phosphate is required as a cofactor.

The enzyme catalyses (2S,6S)-2,6-diaminopimelate + 2-oxoglutarate = (S)-2,3,4,5-tetrahydrodipicolinate + L-glutamate + H2O + H(+). It functions in the pathway amino-acid biosynthesis; L-lysine biosynthesis via DAP pathway; LL-2,6-diaminopimelate from (S)-tetrahydrodipicolinate (aminotransferase route): step 1/1. In terms of biological role, involved in the synthesis of meso-diaminopimelate (m-DAP or DL-DAP), required for both lysine and peptidoglycan biosynthesis. Catalyzes the direct conversion of tetrahydrodipicolinate to LL-diaminopimelate. The sequence is that of LL-diaminopimelate aminotransferase from Cyanothece sp. (strain PCC 7425 / ATCC 29141).